We begin with the raw amino-acid sequence, 474 residues long: Trehalose-6-phosphate synthase (474 aa).

Arg10 lines the D-glucose 6-phosphate pocket. Residue 22–23 (GG) participates in UDP-alpha-D-glucose binding. Tyr77 and Asp131 together coordinate D-glucose 6-phosphate. UDP-alpha-D-glucose-binding residues include Arg263 and Lys268. A D-glucose 6-phosphate-binding site is contributed by Arg301. UDP-alpha-D-glucose contacts are provided by residues Phe340 and 366-370 (LVAKE).

It belongs to the glycosyltransferase 20 family. In terms of assembly, homotetramer.

It carries out the reaction D-glucose 6-phosphate + UDP-alpha-D-glucose = alpha,alpha-trehalose 6-phosphate + UDP + H(+). It participates in glycan biosynthesis; trehalose biosynthesis. Probably involved in the osmoprotection via the biosynthesis of trehalose. Catalyzes the transfer of glucose from UDP-alpha-D-glucose (UDP-Glc) to D-glucose 6-phosphate (Glc-6-P) to form trehalose-6-phosphate. Acts with retention of the anomeric configuration of the UDP-sugar donor. The sequence is that of Trehalose-6-phosphate synthase from Pseudomonas savastanoi (Pseudomonas syringae pv. savastanoi).